The sequence spans 882 residues: Pentatricopeptide repeat-containing protein At3g03580 (882 aa).

20 PPR repeats span residues 3–37 (TRVSSPFISRALSSSSNLNELRRIHALVISLGLDS), 38–68 (SDFFSGKLIDKYSHFREPASSLSVFRRVSPA), 70–104 (NVYLWNSIIRAFSKNGLFPEALEFYGKLRESKVSP), 105–139 (DKYTFPSVIKACAGLFDAEMGDLVYEQILDMGFES), 140–170 (DLFVGNALVDMYSRMGLLTRARQVFDEMPVR), 171–205 (DLVSWNSLISGYSSHGYYEEALEIYHELKNSWIVP), 206–240 (DSFTVSSVLPAFGNLLVVKQGQGLHGFALKSGVNS), 241–271 (VVVVNNGLVAMYLKFRRPTDARRVFDEMDVR), 272–307 (DSVSYNTMICGYLKLEMVEESVRMFLENLDQFKPDL), 309–340 (TVSSVLRACGHLRDLSLAKYIYNYMLKAGFVL), 341–371 (ESTVRNILIDVYAKCGDMITARDVFNSMECK), 372–406 (DTVSWNSIISGYIQSGDLMEAMKLFKMMMIMEEQA), 407–441 (DHITYLMLISVSTRLADLKFGKGLHSNGIKSGICI), 442–472 (DLSVSNALIDMYAKCGEVGDSLKIFSSMGTG), 473–507 (DTVTWNTVISACVRFGDFATGLQVTTQMRKSEVVP), 508–542 (DMATFLVTLPMCASLAAKRLGKEIHCCLLRFGYES), 543–573 (ELQIGNALIEMYSKCGCLENSSRVFERMSRR), 574–608 (DVVTWTGMIYAYGMYGEGEKALETFADMEKSGIVP), 609–639 (DSVVFIAIIYACSHSGLVDEGLACFEKMKTH), and 645–675 (MIEHYACVVDLLSRSQKISKAEEFIQAMPIK). Residues 680 to 755 (IWASVLRACR…NPGYSWIEVG (76 aa)) form a type E motif region. The tract at residues 756–786 (KNVHVFSSGDDSAPQSEAIYKSLEILYSLMA) is type E(+) motif. The type DYW motif stretch occupies residues 787 to 882 (KEGYIPDPRE…DGTCSCKDRW (96 aa)).

Belongs to the PPR family. PCMP-H subfamily.

The sequence is that of Pentatricopeptide repeat-containing protein At3g03580 (PCMP-H23) from Arabidopsis thaliana (Mouse-ear cress).